Consider the following 319-residue polypeptide: Pantothenate kinase (319 aa).

ATP is bound at residue Gly96–Ser103.

The protein belongs to the prokaryotic pantothenate kinase family.

Its subcellular location is the cytoplasm. It catalyses the reaction (R)-pantothenate + ATP = (R)-4'-phosphopantothenate + ADP + H(+). It functions in the pathway cofactor biosynthesis; coenzyme A biosynthesis; CoA from (R)-pantothenate: step 1/5. The protein is Pantothenate kinase (coaA) of Bacillus subtilis (strain 168).